The following is a 260-amino-acid chain: Lys-63-specific deubiquitinase BRCC36 (260 aa).

Positions 6–149 constitute an MPN domain; the sequence is VHLESDAFLV…YTCFQSVQAQ (144 aa). Residues His92, His94, and Asp105 each contribute to the Zn(2+) site. A JAMM motif motif is present at residues 92-105; sequence HSHPHITVWPSHVD.

The protein belongs to the peptidase M67A family. BRCC36 subfamily. As to quaternary structure, component of the BRCA1-A complex, at least composed of brca1, bard1, uimc1/rap80, abraxas1, brcc3/brcc36, babam2 and babam1/nba1. In the BRCA1-A complex, interacts directly with abraxas1 and babam2. Component of the BRISC complex, at least composed of abraxas2, brcc3/brcc36, babam2 and babam1/nba1. Within the complex, interacts directly with abraxas2. Both the BRCA1-A complex and the BRISC complex bind polyubiquitin. It depends on Zn(2+) as a cofactor.

The protein resides in the nucleus. It localises to the cytoplasm. Its subcellular location is the cytoskeleton. The protein localises to the spindle pole. Its function is as follows. Metalloprotease that specifically cleaves 'Lys-63'-linked polyubiquitin chains. Does not have activity toward 'Lys-48'-linked polyubiquitin chains. Component of the BRCA1-A complex, a complex that specifically recognizes 'Lys-63'-linked ubiquitinated histones H2A and H2AX at DNA lesions sites, leading to target the brca1-bard1 heterodimer to sites of DNA damage at double-strand breaks (DSBs). In the BRCA1-A complex, it specifically removes 'Lys-63'-linked ubiquitin on histones H2A and H2AX, antagonizing the rnf8-dependent ubiquitination at double-strand breaks (DSBs). Catalytic subunit of the BRISC complex, a multiprotein complex that specifically cleaves 'Lys-63'-linked ubiquitin in various substrates. Mediates the specific 'Lys-63'-specific deubiquitination associated with the COP9 signalosome complex (CSN), via the interaction of the BRISC complex with the CSN complex. The BRISC complex is required for normal mitotic spindle assembly and microtubule attachment to kinetochores via its role in deubiquitinating numa1. Plays a role in interferon signaling via its role in the deubiquitination of the interferon receptor ifnar1; deubiquitination increases ifnar1 activity by enhancing its stability and cell surface expression. Acts as a regulator of the NLRP3 inflammasome by mediating deubiquitination of nlrp3. Down-regulates the response to bacterial lipopolysaccharide (LPS) via its role in ifnar1 deubiquitination. This Salmo salar (Atlantic salmon) protein is Lys-63-specific deubiquitinase BRCC36 (brcc3).